A 378-amino-acid polypeptide reads, in one-letter code: Cobalt-precorrin-5B C(1)-methyltransferase (378 aa).

It belongs to the CbiD family.

It catalyses the reaction Co-precorrin-5B + S-adenosyl-L-methionine = Co-precorrin-6A + S-adenosyl-L-homocysteine. The protein operates within cofactor biosynthesis; adenosylcobalamin biosynthesis; cob(II)yrinate a,c-diamide from sirohydrochlorin (anaerobic route): step 6/10. In terms of biological role, catalyzes the methylation of C-1 in cobalt-precorrin-5B to form cobalt-precorrin-6A. The polypeptide is Cobalt-precorrin-5B C(1)-methyltransferase (Synechocystis sp. (strain ATCC 27184 / PCC 6803 / Kazusa)).